Reading from the N-terminus, the 484-residue chain is MKFIVKLFPEIMMKSKPVRMRFTKMLETNIRNVLKKVDETAKVKREWDKIMVLVPDDRQDLVEAFAERLACIPGIAHVLQVSESTFESVDDIYQQTLAVYKDELAGKTFCVRVKRVGNHDFRSIEVERYVGGGLNQFTEAAGVRLKNPDMTINLEIDKESLYLVSKRIEGLGGYPMATQEDVLSLISGGFDSGVSSYQFIKRGSRTHYCFFNLGGDQHEIGVKQVAYHLWQKYGESHKVKFISIPFDPVVTEILEKIDNGQMGVILKRMMMRAAAKVARKMGIQALVTGEAMGQVSSQTLTNLSIIDRCTDQLILRPLIAMDKQDIINLSRKIGTEDLSKSIPEYCGVISQRPTVKAVLSKIEAEELKFSEDLIDRVIEAAEVIDIREIATSMDTKITSTETVGDINSGEVIIDVRAPEEEEQSPLEVEGVEVKAIPFFRLATKFADLDKSKTYLLYCDRGVMSKLQALYLQEQGYDNVKVYRP.

The region spanning 63–167 (EAFAERLACI…KESLYLVSKR (105 aa)) is the THUMP domain. ATP contacts are provided by residues 185-186 (LI), Lys-267, Gly-289, and Gln-298. Residues Cys-346 and Cys-458 are joined by a disulfide bond. In terms of domain architecture, Rhodanese spans 406–484 (INSGEVIIDV…GYDNVKVYRP (79 aa)). Cys-458 serves as the catalytic Cysteine persulfide intermediate.

This sequence belongs to the ThiI family.

It localises to the cytoplasm. The enzyme catalyses [ThiI sulfur-carrier protein]-S-sulfanyl-L-cysteine + a uridine in tRNA + 2 reduced [2Fe-2S]-[ferredoxin] + ATP + H(+) = [ThiI sulfur-carrier protein]-L-cysteine + a 4-thiouridine in tRNA + 2 oxidized [2Fe-2S]-[ferredoxin] + AMP + diphosphate. It catalyses the reaction [ThiS sulfur-carrier protein]-C-terminal Gly-Gly-AMP + S-sulfanyl-L-cysteinyl-[cysteine desulfurase] + AH2 = [ThiS sulfur-carrier protein]-C-terminal-Gly-aminoethanethioate + L-cysteinyl-[cysteine desulfurase] + A + AMP + 2 H(+). The protein operates within cofactor biosynthesis; thiamine diphosphate biosynthesis. In terms of biological role, catalyzes the ATP-dependent transfer of a sulfur to tRNA to produce 4-thiouridine in position 8 of tRNAs, which functions as a near-UV photosensor. Also catalyzes the transfer of sulfur to the sulfur carrier protein ThiS, forming ThiS-thiocarboxylate. This is a step in the synthesis of thiazole, in the thiamine biosynthesis pathway. The sulfur is donated as persulfide by IscS. The protein is tRNA sulfurtransferase of Shewanella woodyi (strain ATCC 51908 / MS32).